The following is a 435-amino-acid chain: GTPase Der (435 aa).

2 EngA-type G domains span residues 3–168 (PLVA…PDET) and 176–351 (IKLA…QNRQ). GTP contacts are provided by residues 9–16 (GRPNVGKS), 56–60 (DTGGY), 120–123 (NKVE), 182–189 (GRPNVGKS), 229–233 (DTAGL), and 294–297 (NKWD). Residues 352 to 435 (KKISTSELNR…VPVSFRYRKK (84 aa)) enclose the KH-like domain.

It belongs to the TRAFAC class TrmE-Era-EngA-EngB-Septin-like GTPase superfamily. EngA (Der) GTPase family. In terms of assembly, associates with the 50S ribosomal subunit.

GTPase that plays an essential role in the late steps of ribosome biogenesis. This Chlorobium phaeobacteroides (strain BS1) protein is GTPase Der.